We begin with the raw amino-acid sequence, 918 residues long: DNA repair and recombination protein RAD54B (918 aa).

Over residues 1–11 (MRRSAAPSQVL) the composition is skewed to polar residues. The tract at residues 1-29 (MRRSAAPSQVLGNVAKKPRFIPPGKSNAL) is disordered. A Helicase ATP-binding domain is found at 320 to 487 (GMRVSGRFGA…YALIEFVNPG (168 aa)). 333–340 (DEMGLGKT) contributes to the ATP binding site. The short motif at 438–441 (DEGH) is the DEGH box element. Residues 653–817 (VLVKLLAAIR…HIHFSVEELR (165 aa)) enclose the Helicase C-terminal domain. The tract at residues 842–873 (KDHQNPSSKKPSVSRCCQLRQDQGKHNSKKPL) is disordered.

Belongs to the SNF2/RAD54 helicase family.

It is found in the nucleus. Its function is as follows. Involved in DNA repair and mitotic recombination. In Gallus gallus (Chicken), this protein is DNA repair and recombination protein RAD54B (RAD54B).